The primary structure comprises 776 residues: DNA ligase (776 aa).

Residues 31–35 (DAEYD) and 80–81 (SL) contribute to the NAD(+) site. The active-site N6-AMP-lysine intermediate is the Lys114. Positions 135, 172, 288, and 312 each coordinate NAD(+). Zn(2+) is bound by residues Cys406, Cys409, Cys436, and Cys442. Positions 693–776 (AEGLPLAGQT…TFLAEQGIVV (84 aa)) constitute a BRCT domain.

This sequence belongs to the NAD-dependent DNA ligase family. LigA subfamily. Requires Mg(2+) as cofactor. It depends on Mn(2+) as a cofactor.

It catalyses the reaction NAD(+) + (deoxyribonucleotide)n-3'-hydroxyl + 5'-phospho-(deoxyribonucleotide)m = (deoxyribonucleotide)n+m + AMP + beta-nicotinamide D-nucleotide.. Functionally, DNA ligase that catalyzes the formation of phosphodiester linkages between 5'-phosphoryl and 3'-hydroxyl groups in double-stranded DNA using NAD as a coenzyme and as the energy source for the reaction. It is essential for DNA replication and repair of damaged DNA. This chain is DNA ligase, found in Pseudomonas putida (strain GB-1).